The chain runs to 569 residues: F-box-like/WD repeat-containing protein TBL1X (569 aa).

Residues 55-87 enclose the LisH domain; the sequence is TSDEVNFLVYRYLQESGFSHSAFTFGIESHISQ. Residues 92–137 enclose the F-box-like domain; sequence GTLVPPAALISILQKGLQYVEAEISINEDGTVFDGRPIESLSLIDA. At Lys-153 the chain carries N6-acetyllysine. Residues 170–195 form a disordered region; that stretch reads TSASVSQQNPSKNREATVNGEENRAH. Ser-175 is modified (phosphoserine). WD repeat units lie at residues 222–261, 278–317, 319–358, 361–401, 402–441, 444–492, 495–534, and 536–568; these read GHES…NGGS, PSNK…ASTL, QHKG…AKQQ, FHSA…KTFQ, GHTN…CIHD, AHNK…CTHT, KHQE…LVHS, and RGTG…LDLR. Lys-332 participates in a covalent cross-link: Glycyl lysine isopeptide (Lys-Gly) (interchain with G-Cter in SUMO2).

It belongs to the WD repeat EBI family. Homotetramer; dimer of dimers. Component of the N-Cor repressor complex, at least composed of NCOR1, NCOR2, HDAC3, TBL1X, TBL1R, CORO2A and GPS2. Interacts with GPS2 (when sumoylated); leading to protect GPS2 against degradation by the proteasome. Component of a E3 ubiquitin ligase complex containing UBE2D1, SIAH1, CACYBP/SIP, SKP1, APC and TBL1X. Probably part of other corepressor complexes, that do not contain NCOR1 and NCOR2. Interacts with histones H2B, H3a and H4. Interacts with MECP2; recruits TBL1X to the heterochromatin foci. Interacts with USP44.

The protein localises to the nucleus. F-box-like protein involved in the recruitment of the ubiquitin/19S proteasome complex to nuclear receptor-regulated transcription units. Plays an essential role in transcription activation mediated by nuclear receptors. Probably acts as integral component of corepressor complexes that mediates the recruitment of the 19S proteasome complex, leading to the subsequent proteasomal degradation of transcription repressor complexes, thereby allowing cofactor exchange. The polypeptide is F-box-like/WD repeat-containing protein TBL1X (TBL1X) (Macaca fascicularis (Crab-eating macaque)).